The primary structure comprises 500 residues: Glycerol kinase (500 aa).

Position 12 (Thr-12) interacts with ADP. Thr-12, Thr-13, and Ser-14 together coordinate ATP. Thr-12 contacts sn-glycerol 3-phosphate. Arg-16 lines the ADP pocket. Arg-82, Glu-83, Tyr-134, and Asp-246 together coordinate sn-glycerol 3-phosphate. Glycerol contacts are provided by Arg-82, Glu-83, Tyr-134, Asp-246, and Gln-247. ADP-binding residues include Thr-268 and Gly-312. 4 residues coordinate ATP: Thr-268, Gly-312, Gln-316, and Gly-413. ADP is bound by residues Gly-413 and Asn-417.

This sequence belongs to the FGGY kinase family.

It carries out the reaction glycerol + ATP = sn-glycerol 3-phosphate + ADP + H(+). Its pathway is polyol metabolism; glycerol degradation via glycerol kinase pathway; sn-glycerol 3-phosphate from glycerol: step 1/1. Inhibited by fructose 1,6-bisphosphate (FBP). Its function is as follows. Key enzyme in the regulation of glycerol uptake and metabolism. Catalyzes the phosphorylation of glycerol to yield sn-glycerol 3-phosphate. The chain is Glycerol kinase from Saccharopolyspora erythraea (strain ATCC 11635 / DSM 40517 / JCM 4748 / NBRC 13426 / NCIMB 8594 / NRRL 2338).